A 233-amino-acid chain; its full sequence is Glycolipid transfer protein 3 (233 aa).

Residues Asp-79, Asn-83, Trp-126, and His-165 each coordinate a ganglioside GM3 (d18:1(4E)).

This sequence belongs to the GLTP family.

Functionally, may be involved in glycolipids transfer. The polypeptide is Glycolipid transfer protein 3 (Arabidopsis thaliana (Mouse-ear cress)).